The sequence spans 540 residues: Chaperonin GroEL 4 (540 aa).

Residues 29-32, 86-90, Gly-413, 477-479, and Asp-493 contribute to the ATP site; these read TLGP, DGTTT, and NAA.

Belongs to the chaperonin (HSP60) family. In terms of assembly, forms a cylinder of 14 subunits composed of two heptameric rings stacked back-to-back. Interacts with the co-chaperonin GroES.

It is found in the cytoplasm. The enzyme catalyses ATP + H2O + a folded polypeptide = ADP + phosphate + an unfolded polypeptide.. In terms of biological role, together with its co-chaperonin GroES, plays an essential role in assisting protein folding. The GroEL-GroES system forms a nano-cage that allows encapsulation of the non-native substrate proteins and provides a physical environment optimized to promote and accelerate protein folding. The sequence is that of Chaperonin GroEL 4 from Frankia alni (strain DSM 45986 / CECT 9034 / ACN14a).